We begin with the raw amino-acid sequence, 390 residues long: Cell division protein FtsZ (390 aa).

Residues 21–25 (GGGNN), 108–110 (GTG), Glu-139, Arg-143, and Asp-187 contribute to the GTP site. The disordered stretch occupies residues 315–390 (FDDKPTSHGR…EERRSRRTRR (76 aa)). Over residues 326 to 360 (SGSTGFGTSVNTSSNATSKDESFTSNSSNAQATDS) the composition is skewed to polar residues. Basic and acidic residues predominate over residues 361–384 (VSERTHTTKEDDIPSFIRNREERR).

Belongs to the FtsZ family. As to quaternary structure, homodimer. Polymerizes to form a dynamic ring structure in a strictly GTP-dependent manner. Interacts directly with several other division proteins.

It localises to the cytoplasm. Essential cell division protein that forms a contractile ring structure (Z ring) at the future cell division site. The regulation of the ring assembly controls the timing and the location of cell division. One of the functions of the FtsZ ring is to recruit other cell division proteins to the septum to produce a new cell wall between the dividing cells. Binds GTP and shows GTPase activity. The chain is Cell division protein FtsZ from Staphylococcus aureus (strain NCTC 8325 / PS 47).